Here is a 57-residue protein sequence, read N- to C-terminus: Large ribosomal subunit protein bL32A (57 aa).

It belongs to the bacterial ribosomal protein bL32 family.

In Streptomyces coelicolor (strain ATCC BAA-471 / A3(2) / M145), this protein is Large ribosomal subunit protein bL32A (rpmF1).